The following is a 235-amino-acid chain: MARRPSTDDLRSGPERFMALVKTTVPPVHPAGLPFIGAGLALAAAGRRNRWVRGAGLVAAGANAAFFRHPPRVPPTRPGVVVAPADGLICLVEDAEPPAELNLPARPVPRVSIFLSIFDAHVQRIPISGEVVAVEHRPGLFGSAELAAASEDNERNSVVIRTDTGAQVIAVQIAGLVARRIVCDLTTGDKVTIGDTYGLIRYGSRLDTYLPEGTDIQVLPGQRAVGGETILAELP.

Residue S204 is the Schiff-base intermediate with substrate; via pyruvic acid of the active site. S204 carries the post-translational modification Pyruvic acid (Ser); by autocatalysis.

This sequence belongs to the phosphatidylserine decarboxylase family. PSD-A subfamily. Heterodimer of a large membrane-associated beta subunit and a small pyruvoyl-containing alpha subunit. The cofactor is pyruvate. In terms of processing, is synthesized initially as an inactive proenzyme. Formation of the active enzyme involves a self-maturation process in which the active site pyruvoyl group is generated from an internal serine residue via an autocatalytic post-translational modification. Two non-identical subunits are generated from the proenzyme in this reaction, and the pyruvate is formed at the N-terminus of the alpha chain, which is derived from the carboxyl end of the proenzyme. The post-translation cleavage follows an unusual pathway, termed non-hydrolytic serinolysis, in which the side chain hydroxyl group of the serine supplies its oxygen atom to form the C-terminus of the beta chain, while the remainder of the serine residue undergoes an oxidative deamination to produce ammonia and the pyruvoyl prosthetic group on the alpha chain.

Its subcellular location is the cell membrane. It catalyses the reaction a 1,2-diacyl-sn-glycero-3-phospho-L-serine + H(+) = a 1,2-diacyl-sn-glycero-3-phosphoethanolamine + CO2. Its pathway is phospholipid metabolism; phosphatidylethanolamine biosynthesis; phosphatidylethanolamine from CDP-diacylglycerol: step 2/2. Catalyzes the formation of phosphatidylethanolamine (PtdEtn) from phosphatidylserine (PtdSer). In Mycobacterium sp. (strain KMS), this protein is Phosphatidylserine decarboxylase proenzyme.